Here is a 184-residue protein sequence, read N- to C-terminus: Ribulose bisphosphate carboxylase small subunit, chloroplastic 2 (184 aa).

A chloroplast-targeting transit peptide spans 1 to 59 (MASSMMSNAATAVAVAATSGGAQANMVAPFNGLKSIASFPVTRKSNDITSIASNGGRVQ).

It belongs to the RuBisCO small chain family. Heterohexadecamer of 8 large and 8 small subunits.

Its subcellular location is the plastid. It is found in the chloroplast. Functionally, ruBisCO catalyzes two reactions: the carboxylation of D-ribulose 1,5-bisphosphate, the primary event in carbon dioxide fixation, as well as the oxidative fragmentation of the pentose substrate. Both reactions occur simultaneously and in competition at the same active site. Although the small subunit is not catalytic it is essential for maximal activity. The sequence is that of Ribulose bisphosphate carboxylase small subunit, chloroplastic 2 from Amaranthus hypochondriacus (Prince-of-Wales feather).